Here is a 223-residue protein sequence, read N- to C-terminus: Transmembrane protein 114 (223 aa).

A helical transmembrane segment spans residues Gly7–Ile27. Asn55 and Asn89 each carry an N-linked (GlcNAc...) asparagine glycan. 3 helical membrane-spanning segments follow: residues Phe106–Leu126, Leu134–Ile154, and Leu189–Ala209.

It belongs to the PMP-22/EMP/MP20 family.

The protein resides in the cell junction. Its subcellular location is the tight junction. It is found in the lateral cell membrane. The protein localises to the apical cell membrane. The polypeptide is Transmembrane protein 114 (Homo sapiens (Human)).